The chain runs to 926 residues: Lipoxygenase 4, chloroplastic (926 aa).

The transit peptide at Met1–Val58 directs the protein to the chloroplast. Residues Phe106–Thr228 enclose the PLAT domain. The Lipoxygenase domain occupies Pro231 to Ile926. Residues His585, His590, His777, Asn781, and Ile926 each coordinate Fe cation.

Belongs to the lipoxygenase family. Fe cation serves as cofactor. In terms of tissue distribution, expressed in leaves.

It is found in the plastid. It localises to the chloroplast. The catalysed reaction is (9Z,12Z)-octadecadienoate + O2 = (13S)-hydroperoxy-(9Z,11E)-octadecadienoate. The enzyme catalyses (9Z,12Z,15Z)-octadecatrienoate + O2 = (13S)-hydroperoxy-(9Z,11E,15Z)-octadecatrienoate. Its pathway is lipid metabolism; oxylipin biosynthesis. In terms of biological role, plant lipoxygenases may be involved in a number of diverse aspects of plant physiology including growth and development, pest resistance, and senescence or responses to wounding. Catalyzes the hydroperoxidation of lipids containing a cis,cis-1,4-pentadiene structure. 13S-lipoxygenase that can use linolenic acid as substrates. This Arabidopsis thaliana (Mouse-ear cress) protein is Lipoxygenase 4, chloroplastic (LOX4).